The primary structure comprises 500 residues: Probable cytosol aminopeptidase (500 aa).

Mn(2+) is bound by residues K265 and D270. K277 is an active-site residue. Mn(2+) is bound by residues D288, D347, and E349. Residue R351 is part of the active site.

Belongs to the peptidase M17 family. Requires Mn(2+) as cofactor.

It is found in the cytoplasm. It carries out the reaction Release of an N-terminal amino acid, Xaa-|-Yaa-, in which Xaa is preferably Leu, but may be other amino acids including Pro although not Arg or Lys, and Yaa may be Pro. Amino acid amides and methyl esters are also readily hydrolyzed, but rates on arylamides are exceedingly low.. The enzyme catalyses Release of an N-terminal amino acid, preferentially leucine, but not glutamic or aspartic acids.. Its function is as follows. Presumably involved in the processing and regular turnover of intracellular proteins. Catalyzes the removal of unsubstituted N-terminal amino acids from various peptides. The chain is Probable cytosol aminopeptidase from Rickettsia africae (strain ESF-5).